The sequence spans 102 residues: Large ribosomal subunit protein uL24 (102 aa).

This sequence belongs to the universal ribosomal protein uL24 family. Part of the 50S ribosomal subunit.

Its function is as follows. One of two assembly initiator proteins, it binds directly to the 5'-end of the 23S rRNA, where it nucleates assembly of the 50S subunit. In terms of biological role, one of the proteins that surrounds the polypeptide exit tunnel on the outside of the subunit. This chain is Large ribosomal subunit protein uL24, found in Alkaliphilus oremlandii (strain OhILAs) (Clostridium oremlandii (strain OhILAs)).